The following is a 783-amino-acid chain: Protein DWD HYPERSENSITIVE TO UV-B 1 (783 aa).

WD repeat units lie at residues 145–198 (GEFT…LKLP) and 212–256 (SDSS…DPSL). A Nuclear localization signal motif is present at residues 382-389 (RKKESVVR). 6 WD repeats span residues 439–480 (DNSR…IFRY), 485–525 (GSQS…STVT), 538–577 (DEFD…RLQV), 581–621 (MHQE…SRPC), 625–664 (SSTK…LHLN), and 666–710 (EIVP…RRLR).

In terms of assembly, interacts directly with DDB1A. Binds to COP1 and RUP1.

It localises to the nucleus. Functionally, may act as a substrate receptor of a CUL4-RING E3 ubiquitin-protein ligase (CRL4) complex involved in the negative regulation of cellular responses to ultraviolet-B (UV-B) illumination, likely in coordination with RUP1. Interacts with COP1 and probably prevents the formation of active UVR8-COP1 complex, thus avoiding UVR8-COP1-mediated positive regulation of UV-B responses. The sequence is that of Protein DWD HYPERSENSITIVE TO UV-B 1 from Arabidopsis thaliana (Mouse-ear cress).